We begin with the raw amino-acid sequence, 278 residues long: Tryptophan synthase alpha chain (278 aa).

Catalysis depends on proton acceptor residues Glu61 and Asp72.

Belongs to the TrpA family. As to quaternary structure, tetramer of two alpha and two beta chains.

It catalyses the reaction (1S,2R)-1-C-(indol-3-yl)glycerol 3-phosphate + L-serine = D-glyceraldehyde 3-phosphate + L-tryptophan + H2O. Its pathway is amino-acid biosynthesis; L-tryptophan biosynthesis; L-tryptophan from chorismate: step 5/5. The alpha subunit is responsible for the aldol cleavage of indoleglycerol phosphate to indole and glyceraldehyde 3-phosphate. This chain is Tryptophan synthase alpha chain, found in Shewanella oneidensis (strain ATCC 700550 / JCM 31522 / CIP 106686 / LMG 19005 / NCIMB 14063 / MR-1).